The primary structure comprises 959 residues: Isoleucine--tRNA ligase (959 aa).

Positions 60–70 (PYANGSLHMGH) match the 'HIGH' region motif. L-isoleucyl-5'-AMP is bound at residue Glu-569. A 'KMSKS' region motif is present at residues 610-614 (KMSKS). An ATP-binding site is contributed by Lys-613. Cys-928, Cys-931, Cys-948, and Cys-951 together coordinate Zn(2+).

Belongs to the class-I aminoacyl-tRNA synthetase family. IleS type 1 subfamily. Monomer. The cofactor is Zn(2+).

The protein resides in the cytoplasm. The catalysed reaction is tRNA(Ile) + L-isoleucine + ATP = L-isoleucyl-tRNA(Ile) + AMP + diphosphate. Functionally, catalyzes the attachment of isoleucine to tRNA(Ile). As IleRS can inadvertently accommodate and process structurally similar amino acids such as valine, to avoid such errors it has two additional distinct tRNA(Ile)-dependent editing activities. One activity is designated as 'pretransfer' editing and involves the hydrolysis of activated Val-AMP. The other activity is designated 'posttransfer' editing and involves deacylation of mischarged Val-tRNA(Ile). The polypeptide is Isoleucine--tRNA ligase (Gloeothece citriformis (strain PCC 7424) (Cyanothece sp. (strain PCC 7424))).